We begin with the raw amino-acid sequence, 254 residues long: Mannose-binding protein (254 aa).

Positions M1 to A19 are cleaved as a signal peptide. A disordered region spans residues N46–R99. The span at R51–E66 shows a compositional bias: basic and acidic residues. Position 57 is a 4-hydroxyproline (P57). K58 and K61 each carry 5-hydroxylysine. Residues K58 and K61 are each glycosylated (O-linked (Gal...) hydroxylysine). A 4-hydroxyproline modification is found at P75. 2 positions are modified to 5-hydroxylysine: K93 and K96. The region spanning V140–I250 is the C-type lectin domain. Cystine bridges form between C161-C252 and C229-C243.

As to quaternary structure, oligomeric complex of 3 or more homotrimers.

The protein resides in the secreted. Functionally, calcium-dependent lectin involved in innate immune defense. Binds mannose, fucose and N-acetylglucosamine on different microorganisms and activates the lectin complement pathway. The chain is Mannose-binding protein from Gallus gallus (Chicken).